Reading from the N-terminus, the 873-residue chain is Tetratricopeptide repeat protein 16 (873 aa).

The disordered stretch occupies residues 1–20 (MTDSDEDALKVDQGPSRDIP). 8 TPR repeats span residues 61-94 (VREY…DPQL), 96-128 (DFYA…QQDN), 136-169 (TFVL…QPEK), 251-284 (AQQA…NPLD), 285-318 (PSLF…VTED), 331-364 (LLTY…EQQE), 365-398 (KGLY…SPQD), and 406-439 (GLLQ…NPQK). Disordered stretches follow at residues 553–626 (EELK…TSET) and 639–873 (SATA…YEAV). Acidic residues predominate over residues 571-582 (GEAEAPEEEEEK). Positions 583 to 593 (EKEKKEEKKSE) are enriched in basic and acidic residues. Composition is skewed to polar residues over residues 600–626 (ASLS…TSET), 639–663 (SATA…NNRE), and 675–693 (TQGQ…SQRR). Residues 694 to 708 (NSSKTKATIHKRNSS) show a composition bias toward basic residues. Residues 709–750 (KTKATQSQRRNSSKTRATQGQGQSSSKTEATQGQRQSSSEIE) show a composition bias toward polar residues. Basic residues predominate over residues 763–784 (KTTRSPRQRPRKVKAARGRSWR). Polar residues-rich tracts occupy residues 800–828 (RSST…GQRS) and 836–860 (GKSQ…SLSK).

This chain is Tetratricopeptide repeat protein 16 (TTC16), found in Homo sapiens (Human).